The primary structure comprises 291 residues: Transmembrane protein 41B (291 aa).

Residues 1–11 (MAKGRVAERSQ) show a composition bias toward basic and acidic residues. The tract at residues 1–38 (MAKGRVAERSQTEMLHSTPAGDRAVGTQGSAAPGNKDH) is disordered. Threonine 18 is subject to Phosphothreonine. Helical transmembrane passes span 52–72 (TSLL…FLVY), 109–129 (FYVQ…TFAI), 147–169 (LALF…LSYL), 197–217 (LINY…FINI), 225–245 (PLKV…FVAI), and 262–282 (SWNS…PAIF). The tract at residues 140–251 (GFLYPFPLAL…FVAIKAGTTL (112 aa)) is VTT domain; required for its function in autophagy.

This sequence belongs to the TMEM41 family. In terms of assembly, interacts with VMP1. Interacts with COPA, COPB1, VDAC1 and ERLIN2. Interacts with ATG2A. Interacts with SURF4.

The protein resides in the endoplasmic reticulum membrane. Its subcellular location is the endomembrane system. The enzyme catalyses a 1,2-diacyl-sn-glycero-3-phospho-L-serine(in) = a 1,2-diacyl-sn-glycero-3-phospho-L-serine(out). It carries out the reaction cholesterol(in) = cholesterol(out). The catalysed reaction is a 1,2-diacyl-sn-glycero-3-phosphocholine(in) = a 1,2-diacyl-sn-glycero-3-phosphocholine(out). It catalyses the reaction a 1,2-diacyl-sn-glycero-3-phosphoethanolamine(in) = a 1,2-diacyl-sn-glycero-3-phosphoethanolamine(out). Functionally, phospholipid scramblase involved in lipid homeostasis and membrane dynamics processes. Has phospholipid scramblase activity toward cholesterol and phosphatidylserine, as well as phosphatidylethanolamine and phosphatidylcholine. Required for autophagosome formation: participates in early stages of autophagosome biogenesis at the endoplasmic reticulum (ER) membrane by reequilibrating the leaflets of the ER as lipids are extracted by ATG2 (ATG2A or ATG2B) to mediate autophagosome assembly. In addition to autophagy, involved in other processes in which phospholipid scramblase activity is required. Required for normal motor neuron development. The chain is Transmembrane protein 41B from Rattus norvegicus (Rat).